The chain runs to 229 residues: Coiled-coil domain-containing protein 134 (229 aa).

Residues 1-22 form the signal peptide; the sequence is MDLLQFLAFLFVLLLSGMGATG. Asparagine 148 is a short sequence motif (prevents secretion from ER). Asparagine 148 carries N-linked (GlcNAc...) asparagine glycosylation. The disordered stretch occupies residues 193 to 229; it reads TDPFQKALREEEKRRKKEEKRKEIRKGPRISRSQSEL. Residues 196–218 are a coiled coil; it reads FQKALREEEKRRKKEEKRKEIRK. The Nuclear localization signal signature appears at 206-213; that stretch reads RRKKEEKR.

It belongs to the CCDC134 family. In terms of assembly, interacts with TADA2A. Associates with the PCAF complex via TADA2A binding. Post-translationally, O-glycosylated, with additional sialic acid modifications. In terms of tissue distribution, expressed in cervical gland, cervical squamous epithelium, endometrium, stomach, kidney distal convoluted tubule, spermatogenic cells in testis, mammary gland, liver and striated muscle (at protein level). Also detected in placenta. Highest expression in testis relative to other tissues. Detected in T cells and dendritic cells; highly expressed in activated CD8(+) T cells, and also expressed at lower levels in CD4(+) T cells.

The protein resides in the endoplasmic reticulum lumen. Its subcellular location is the secreted. It localises to the cytoplasm. It is found in the nucleus. In terms of biological role, molecular adapter required to prevent protein hyperglycosylation of HSP90B1: during translation, associates with nascent HSP90B1 and the STT3A catalytic component of the OST-A complex and tethers them to a specialized translocon that forms a microenvironment for HSP90B1 folding. In the CCDC134-containing translocon, STT3A associates with the SRT pseudosubstrate motif of HSP90B1, preventing access to facultative glycosylation sites until folding is completed, preventing hyperglycosylation and subsequent degradation of HSP90B1. In extracellular secreted form, promotes proliferation and activation of CD8(+) T-cells, suggesting a cytokine-like function. May inhibit ERK and JNK signaling activity. May suppress cell migration and invasion activity, via its effects on ERK and JNK signaling. May also localize in the nucleus: enhances stability of the PCAF histone acetyltransferase (HAT) complex member TADA2A and thus promotes PCAF-mediated histone acetyltransferase activity. Has a critical role in the regulation of osteogenesis and bone development. The protein is Coiled-coil domain-containing protein 134 of Homo sapiens (Human).